A 590-amino-acid polypeptide reads, in one-letter code: MATETTKMIYTPPPLDIKMEIEIGEQPQPPVKCSNFFANHWKGLVVFLVPLLCLPVMLLNEGAEFRCMYLLLVMAIFWVTEALPLYVTSMIPIVAFPIMGIMSSDQTCRLYFKDTLVMFMGGIMVALAVEYCNLHKRLALRVIQIVGCSPRRLHFGLIMVTMFLSMWISNAACTAMMCPIIQAVLEELQAQGVCKINHEPQYQIVGGNKKNNEDEPPYPTKITLCYYLGIAYASSLGGCGTIIGTATNLTFKGIYEARFKNSTEQMDFPTFMFYSVPSMLVYTLLTFVFLQWHFMGLWRPKSKEAQEVQRGREGADVAKKVIDQRYKDLGPMSIHEIQVMILFIFMVVMYFTRKPGIFLGWADLLNSKDIRNSMPTIFVVVMCFMLPANYAFLRYCTRRGGPVPTGPTPSLITWKFIQTKVPWGLVFLLGGGFALAEGSKQSGMAKLIGNALIGLKVLPNSVLLLVVILVAVFLTAFSSNVAIANIIIPVLAEMSLAIEIHPLYLILPAGLACSMAFHLPVSTPPNALVAGYANIRTKDMAIAGIGPTIITIITLFVFCQTWGLVVYPNLNSFPEWAQIYAAAALGNKTH.

The next 11 membrane-spanning stretches (helical) occupy residues 43 to 63 (GLVV…NEGA), 82 to 102 (ALPL…MGIM), 115 to 135 (TLVM…CNLH), 153 to 173 (LHFG…NAAC), 224 to 244 (LCYY…TIIG), 270 to 290 (TFMF…FVFL), 329 to 349 (LGPM…MVVM), 373 to 393 (SMPT…YAFL), 457 to 477 (VLPN…LTAF), 509 to 529 (AGLA…NALV), and 540 to 560 (MAIA…VFCQ).

It belongs to the SLC13A/DASS transporter (TC 2.A.47) family. NADC subfamily. In adults, abundantly expressed in the fat body, basolateral region of midgut cells and oenocytes. Low level expression is seen in the halteres, procardia, restricted regions of the esophagus and hindgut, base of the legs and in a subset of cells in the third segment of the antennae.

The protein resides in the basolateral cell membrane. Cation-independent electroneutral transporter (not associated with membrane depolarization) of a variety of tricarboxylic and dicarboxylic acid-cycle intermediates. There is also small, but detectable, transport of monocarboxylics. Transport is through the epithelium of the gut and across the plasma membranes of organs involved in intermediary metabolism and storage. Affinity for substrates is citrate &gt; succinate &gt; pyruvate. Fumarate, a-ketoglutarate, and glutarate are also transported, but not lactate. Transport mechanism that is not coupled to Na(+), K(+), or Cl(-). Function is shown in Xenopus oocytes and human retinal pigment epithelial (HRPE) cell lines. The polypeptide is Protein I'm not dead yet (Indy) (Drosophila melanogaster (Fruit fly)).